The chain runs to 224 residues: Phosphoglycolate phosphatase (224 aa).

Residue D10 is the Nucleophile of the active site. 3 residues coordinate Mg(2+): D10, D12, and D176.

This sequence belongs to the HAD-like hydrolase superfamily. CbbY/CbbZ/Gph/YieH family. Requires Mg(2+) as cofactor.

The enzyme catalyses 2-phosphoglycolate + H2O = glycolate + phosphate. It participates in organic acid metabolism; glycolate biosynthesis; glycolate from 2-phosphoglycolate: step 1/1. Specifically catalyzes the dephosphorylation of 2-phosphoglycolate. Is involved in the dissimilation of the intracellular 2-phosphoglycolate formed during the DNA repair of 3'-phosphoglycolate ends, a major class of DNA lesions induced by oxidative stress. The polypeptide is Phosphoglycolate phosphatase (Pasteurella multocida (strain Pm70)).